Reading from the N-terminus, the 79-residue chain is Cytochrome b (79 aa).

Transmembrane regions (helical) follow at residues 1 to 7, 31 to 52, and 67 to 79; these read SALFLAM, WLIR…YLHI, and WNIG…LTMA. Residues histidine 37 and histidine 51 each coordinate heme b.

This sequence belongs to the cytochrome b family. In terms of assembly, the cytochrome bc1 complex contains 11 subunits: 3 respiratory subunits (MT-CYB, CYC1 and UQCRFS1), 2 core proteins (UQCRC1 and UQCRC2) and 6 low-molecular weight proteins (UQCRH/QCR6, UQCRB/QCR7, UQCRQ/QCR8, UQCR10/QCR9, UQCR11/QCR10 and a cleavage product of UQCRFS1). This cytochrome bc1 complex then forms a dimer. Requires heme b as cofactor.

Its subcellular location is the mitochondrion inner membrane. In terms of biological role, component of the ubiquinol-cytochrome c reductase complex (complex III or cytochrome b-c1 complex) that is part of the mitochondrial respiratory chain. The b-c1 complex mediates electron transfer from ubiquinol to cytochrome c. Contributes to the generation of a proton gradient across the mitochondrial membrane that is then used for ATP synthesis. The polypeptide is Cytochrome b (MT-CYB) (Dipodomys panamintinus (Panamint kangaroo rat)).